The chain runs to 714 residues: Cell wall protein IFF7 (714 aa).

An N-terminal signal peptide occupies residues 1 to 19 (MLFTLSILSTLLFSTSISA). N-linked (GlcNAc...) asparagine glycosylation is present at asparagine 200. The span at 320 to 330 (GPVPSQKSLPS) shows a compositional bias: polar residues. Disordered regions lie at residues 320–633 (GPVP…AADS) and 660–692 (PIAN…ANGS). The segment covering 346-504 (GSSSSSSVVS…SSTPLSGDSS (159 aa)) has biased composition (low complexity). 5 N-linked (GlcNAc...) asparagine glycosylation sites follow: asparagine 390, asparagine 394, asparagine 399, asparagine 421, and asparagine 473. Polar residues predominate over residues 505 to 519 (QVSSLTTGTSPDTIA). Residues 520-544 (SFQTDSTSFGFGSGSPSSGAVQSSG) show a composition bias toward low complexity. Over residues 545–558 (VTNSTPNTGDVNTQ) the composition is skewed to polar residues. 2 stretches are compositionally biased toward low complexity: residues 559 to 590 (SNTA…TTTG) and 597 to 625 (NNNN…NTNN). Residues asparagine 577, asparagine 621, asparagine 624, and asparagine 663 are each glycosylated (N-linked (GlcNAc...) asparagine). A compositionally biased stretch (low complexity) spans 665 to 679 (SSSPSSSSSSSSSSS). An N-linked (GlcNAc...) asparagine glycan is attached at asparagine 690. A lipid anchor (GPI-anchor amidated asparagine) is attached at asparagine 690. The propeptide at 691 to 714 (GSSKLSIGMTFMISGFATMFALFM) is removed in mature form.

Belongs to the HYR1/IFF family. Post-translationally, the GPI-anchor is attached to the protein in the endoplasmic reticulum and serves to target the protein to the cell surface. There, the glucosamine-inositol phospholipid moiety is cleaved off and the GPI-modified mannoprotein is covalently attached via its lipidless GPI glycan remnant to the 1,6-beta-glucan of the outer cell wall layer.

Its subcellular location is the secreted. It localises to the cell wall. The protein resides in the membrane. In terms of biological role, GPI-anchored cell wall protein involved in cell wall organization, hyphal growth, as well as in host-fungal interaction and virulence. This is Cell wall protein IFF7 (IFF8) from Candida albicans (strain SC5314 / ATCC MYA-2876) (Yeast).